Reading from the N-terminus, the 330-residue chain is Anthranilate phosphoribosyltransferase (330 aa).

5-phospho-alpha-D-ribose 1-diphosphate-binding positions include glycine 75, 78 to 79 (GD), threonine 83, 85 to 88 (NVST), 103 to 111 (KHGNRAASS), and alanine 115. Glycine 75 contributes to the anthranilate binding site. Serine 87 contacts Mg(2+). Asparagine 106 is a binding site for anthranilate. An anthranilate-binding site is contributed by arginine 161. Mg(2+)-binding residues include aspartate 220 and glutamate 221.

Belongs to the anthranilate phosphoribosyltransferase family. In terms of assembly, homodimer. The cofactor is Mg(2+).

The catalysed reaction is N-(5-phospho-beta-D-ribosyl)anthranilate + diphosphate = 5-phospho-alpha-D-ribose 1-diphosphate + anthranilate. Its pathway is amino-acid biosynthesis; L-tryptophan biosynthesis; L-tryptophan from chorismate: step 2/5. Its function is as follows. Catalyzes the transfer of the phosphoribosyl group of 5-phosphorylribose-1-pyrophosphate (PRPP) to anthranilate to yield N-(5'-phosphoribosyl)-anthranilate (PRA). This Novosphingobium aromaticivorans (strain ATCC 700278 / DSM 12444 / CCUG 56034 / CIP 105152 / NBRC 16084 / F199) protein is Anthranilate phosphoribosyltransferase.